Here is a 1323-residue protein sequence, read N- to C-terminus: Regulatory protein ADR1 (1323 aa).

A Phosphoserine modification is found at Ser54. C2H2-type zinc fingers lie at residues 104–126 (FVCEVCTRAFARQEHLKRHYRSH) and 132–155 (YPCGLCNRCFTRRDLLIRHAQKIH). A disordered region spans residues 175–216 (KARKNSASSVKFQTPTYGTPDNGNFLNRTTANTRRKASPEAN). Over residues 179–206 (NSASSVKFQTPTYGTPDNGNFLNRTTAN) the composition is skewed to polar residues. Phosphothreonine occurs at positions 188 and 193. Ser230 is modified (phosphoserine; by PKA; in vitro). Residue Ser258 is modified to Phosphoserine. At Thr259 the chain carries Phosphothreonine. 3 positions are modified to phosphoserine: Ser299, Ser323, and Ser325. Thr327 is modified (phosphothreonine).

Post-translationally, phosphorylation at Ser-230 by cAMP-dependent protein kinase A does not affect DNA binding but appears to prevent transcription of ADH2 during glucose repression.

Its subcellular location is the nucleus. Its function is as follows. Required for transcriptional activation of glucose-repressible alcohol dehydrogenase (ADH2). This Saccharomyces cerevisiae (strain ATCC 204508 / S288c) (Baker's yeast) protein is Regulatory protein ADR1 (ADR1).